The sequence spans 132 residues: MNPVEDFTKLNLFGTFTNFVSAPVPFDCYHDPTKSETILVADLPGVLPNDMKVNVDKDKLIIQGKRECEKHDYLFSNRWCGSFIHHISFAKEVKASDVNVGLGEGILKITISNTPTNNVIGVKMSNNNKVEF.

The sHSP domain occupies 15 to 131 (TFTNFVSAPV…VKMSNNNKVE (117 aa)).

Belongs to the small heat shock protein (HSP20) family.

The polypeptide is Small heat shock protein hspL (hspL) (Dictyostelium discoideum (Social amoeba)).